Consider the following 352-residue polypeptide: Ion-translocating oxidoreductase complex subunit D (352 aa).

5 consecutive transmembrane segments (helical) span residues 20–40 (IMLLVLLAAIPGIATQLWFFG), 42–62 (GTLVQIILAVISALSAEALVL), 68–88 (PIAAILKDNSALLTGLLLAVS), 89–109 (IPPLAPWWMVVLGTVFAVIIA), and 123–143 (PAMIGYVVLLISFPVQMTNWL). FMN phosphoryl threonine is present on threonine 187. 5 helical membrane-spanning segments follow: residues 217–237 (GAGWQWVNLAWLAGGVWLLAI), 244–264 (IPVSFLVSLALCATLGWLFAP), 267–287 (LASPQIHMLSGATMLGAFFIL), 301–321 (LIFGALAGVLVWLIRSFGGYP), and 322–342 (DGVAFAVLLANITVPLIDYYT).

This sequence belongs to the NqrB/RnfD family. The complex is composed of six subunits: RsxA, RsxB, RsxC, RsxD, RsxE and RsxG. It depends on FMN as a cofactor.

It localises to the cell inner membrane. In terms of biological role, part of a membrane-bound complex that couples electron transfer with translocation of ions across the membrane. Required to maintain the reduced state of SoxR. This chain is Ion-translocating oxidoreductase complex subunit D, found in Escherichia fergusonii (strain ATCC 35469 / DSM 13698 / CCUG 18766 / IAM 14443 / JCM 21226 / LMG 7866 / NBRC 102419 / NCTC 12128 / CDC 0568-73).